A 105-amino-acid chain; its full sequence is uncharacterized protein (105 aa).

Positions 1-24 are cleaved as a signal peptide; it reads MYWPCLVITPFTVGESFCLLLSLG.

This is an uncharacterized protein from Saccharomyces cerevisiae (strain ATCC 204508 / S288c) (Baker's yeast).